The primary structure comprises 830 residues: Phenylalanine--tRNA ligase beta subunit (830 aa).

The tRNA-binding domain occupies 39 to 158 (GQSLDGVVVG…DDTPVGTPFP (120 aa)). The region spanning 417-492 (PAEKTIALRP…RLHGYDQIPE (76 aa)) is the B5 domain. The Mg(2+) site is built by D470, D476, E479, and E480. The interval 490–510 (IPEPERVPVPSRTPEQPPEET) is disordered. In terms of domain architecture, FDX-ACB spans 736–828 (SRFPVVDRDL…LAENHGARLR (93 aa)).

The protein belongs to the phenylalanyl-tRNA synthetase beta subunit family. Type 1 subfamily. As to quaternary structure, tetramer of two alpha and two beta subunits. Mg(2+) is required as a cofactor.

The protein localises to the cytoplasm. It catalyses the reaction tRNA(Phe) + L-phenylalanine + ATP = L-phenylalanyl-tRNA(Phe) + AMP + diphosphate + H(+). The polypeptide is Phenylalanine--tRNA ligase beta subunit (Salinibacter ruber (strain DSM 13855 / M31)).